The following is a 637-amino-acid chain: Sodium-dependent proline transporter (637 aa).

Topologically, residues 1-45 (MKKLQEAHLRKPITPDLLMTPSDQGDVDLDVDFAADRGNWTGKLD) are cytoplasmic. Threonine 20 bears the Phosphothreonine mark. At serine 22 the chain carries Phosphoserine. 3 helical membrane passes run 46-66 (FLLS…FPYR), 74-93 (AFLV…LFFL), and 117-137 (GAGA…NMII). Over 138–214 (AYVLFYLFAS…QGIGRPGEIR (77 aa)) the chain is Extracellular. Residue asparagine 182 is glycosylated (N-linked (GlcNAc...) asparagine). 9 helical membrane passes run 215–233 (WNLC…LCIL), 242–259 (VVYF…MLLV), 295–312 (IFYS…FASY), 324–345 (FIVT…FSVL), 378–397 (LPLS…TLGL), 425–443 (VFSG…ILTT), 459–479 (SFGL…VYGI), 500–519 (ACWL…YSIV), and 538–556 (LGIL…GMLV). The Cytoplasmic segment spans residues 557-637 (AVLREEGSLW…IAEEEEESMM (81 aa)). A phosphoserine mark is found at serine 573 and serine 582. Threonine 588 carries the phosphothreonine modification. Position 591 is a phosphotyrosine (tyrosine 591). Phosphoserine is present on residues serine 598 and serine 600.

The protein belongs to the sodium:neurotransmitter symporter (SNF) (TC 2.A.22) family. SLC6A7 subfamily.

It localises to the synaptic cell membrane. The catalysed reaction is L-proline(out) + chloride(out) + 2 Na(+)(out) = L-proline(in) + chloride(in) + 2 Na(+)(in). The enzyme catalyses L-pipecolate(out) + chloride(out) + 2 Na(+)(out) = L-pipecolate(in) + chloride(in) + 2 Na(+)(in). Brain specific sodium (and chloride)-dependent proline transporter. Terminates the action of proline by its high affinity sodium-dependent reuptake into presynaptic terminals. This Mus musculus (Mouse) protein is Sodium-dependent proline transporter.